Reading from the N-terminus, the 402-residue chain is Plasminogen activator inhibitor 1 (402 aa).

A signal peptide spans 1–22; it reads MQMSSALACLILGLVLVSGKGF. N-linked (GlcNAc...) asparagine glycans are attached at residues N232, N288, and N352.

This sequence belongs to the serpin family. In terms of assembly, forms a heterodimer with TMPRSS7. Interacts with VTN. Binds LRP1B; binding is followed by internalization and degradation. Interacts with PPP1CB. In complex with PLAU/uPA, interacts with PLAUR/uPAR. Interacts with SORL1 and LRP1, either alone or in complex with PLAU; these interactions are abolished in the presence of LRPAP1/RAP. The ternary complex composed of PLAUR-PLAU-PAI1 also interacts with SORL1. Interacts with PLAT/tPA. Also interacts with SORL1, when complexed to PLAT/tPA.

Its subcellular location is the secreted. Functionally, serine protease inhibitor. Inhibits TMPRSS7. Is a primary inhibitor of tissue-type plasminogen activator (PLAT) and urokinase-type plasminogen activator (PLAU). As PLAT inhibitor, it is required for fibrinolysis down-regulation and is responsible for the controlled degradation of blood clots. As PLAU inhibitor, it is involved in the regulation of cell adhesion and spreading. Acts as a regulator of cell migration, independently of its role as protease inhibitor. It is required for stimulation of keratinocyte migration during cutaneous injury repair. Involved in cellular and replicative senescence. Plays a role in alveolar type 2 cells senescence in the lung. Is involved in the regulation of cementogenic differentiation of periodontal ligament stem cells, and regulates odontoblast differentiation and dentin formation during odontogenesis. The protein is Plasminogen activator inhibitor 1 (Serpine1) of Mus musculus (Mouse).